The primary structure comprises 217 residues: Thiamine-phosphate synthase (217 aa).

4-amino-2-methyl-5-(diphosphooxymethyl)pyrimidine is bound by residues 39 to 43 (QLRRK) and Asn71. Asp72 and Asp91 together coordinate Mg(2+). Position 110 (Ser110) interacts with 4-amino-2-methyl-5-(diphosphooxymethyl)pyrimidine. 137–139 (SPT) serves as a coordination point for 2-[(2R,5Z)-2-carboxy-4-methylthiazol-5(2H)-ylidene]ethyl phosphate. Lys140 contacts 4-amino-2-methyl-5-(diphosphooxymethyl)pyrimidine. Residues Gly173 and 193–194 (IS) each bind 2-[(2R,5Z)-2-carboxy-4-methylthiazol-5(2H)-ylidene]ethyl phosphate.

This sequence belongs to the thiamine-phosphate synthase family. Mg(2+) serves as cofactor.

The enzyme catalyses 2-[(2R,5Z)-2-carboxy-4-methylthiazol-5(2H)-ylidene]ethyl phosphate + 4-amino-2-methyl-5-(diphosphooxymethyl)pyrimidine + 2 H(+) = thiamine phosphate + CO2 + diphosphate. It catalyses the reaction 2-(2-carboxy-4-methylthiazol-5-yl)ethyl phosphate + 4-amino-2-methyl-5-(diphosphooxymethyl)pyrimidine + 2 H(+) = thiamine phosphate + CO2 + diphosphate. It carries out the reaction 4-methyl-5-(2-phosphooxyethyl)-thiazole + 4-amino-2-methyl-5-(diphosphooxymethyl)pyrimidine + H(+) = thiamine phosphate + diphosphate. It functions in the pathway cofactor biosynthesis; thiamine diphosphate biosynthesis; thiamine phosphate from 4-amino-2-methyl-5-diphosphomethylpyrimidine and 4-methyl-5-(2-phosphoethyl)-thiazole: step 1/1. Condenses 4-methyl-5-(beta-hydroxyethyl)thiazole monophosphate (THZ-P) and 2-methyl-4-amino-5-hydroxymethyl pyrimidine pyrophosphate (HMP-PP) to form thiamine monophosphate (TMP). The chain is Thiamine-phosphate synthase from Bordetella parapertussis (strain 12822 / ATCC BAA-587 / NCTC 13253).